Consider the following 288-residue polypeptide: Small ribosomal subunit protein uS15m (288 aa).

The transit peptide at 1–50 (MRLFEGAFQPWKLASTNLMQQCLLLNKKSQFHTTCILQGLKKQKANQRRK) directs the protein to the mitochondrion.

The protein belongs to the universal ribosomal protein uS15 family. Component of the mitochondrial small ribosomal subunit (mt-SSU). Mature yeast 74S mitochondrial ribosomes consist of a small (37S) and a large (54S) subunit. The 37S small subunit contains a 15S ribosomal RNA (15S mt-rRNA) and at least 32 different proteins. The 54S large subunit contains a 21S rRNA (21S mt-rRNA) and at least 45 different proteins.

The protein localises to the mitochondrion. Functionally, component of the mitochondrial ribosome (mitoribosome), a dedicated translation machinery responsible for the synthesis of mitochondrial genome-encoded proteins, including at least some of the essential transmembrane subunits of the mitochondrial respiratory chain. The mitoribosomes are attached to the mitochondrial inner membrane and translation products are cotranslationally integrated into the membrane. In Schizosaccharomyces pombe (strain 972 / ATCC 24843) (Fission yeast), this protein is Small ribosomal subunit protein uS15m (mrps28).